A 160-amino-acid chain; its full sequence is Globin CTT-Y (160 aa).

Positions methionine 1–alanine 16 are cleaved as a signal peptide. One can recognise a Globin domain in the interval threonine 17–glutamate 160. Histidine 74 and histidine 109 together coordinate heme b.

Belongs to the globin family.

In Chironomus thummi piger (Midge), this protein is Globin CTT-Y (CTT-Y).